The sequence spans 348 residues: Protein RecA (348 aa).

Residue 71–78 (GVESSGKT) participates in ATP binding.

Belongs to the RecA family.

It is found in the cytoplasm. Functionally, can catalyze the hydrolysis of ATP in the presence of single-stranded DNA, the ATP-dependent uptake of single-stranded DNA by duplex DNA, and the ATP-dependent hybridization of homologous single-stranded DNAs. It interacts with LexA causing its activation and leading to its autocatalytic cleavage. This Aquifex pyrophilus protein is Protein RecA.